The sequence spans 301 residues: Protein translocase subunit SecF (301 aa).

The next 6 helical transmembrane spans lie at 17–37 (YIALALSCIMIILGIFAIFQI), 137–157 (DALFAILAATAGILIYIAIRF), 163–183 (IGATVATFHDVMAVLGIFYIL), 190–210 (IFISALLTIAGYSLTDTVVVF), 239–261 (LSRTIVTSLTTLMAAVALFFFGG), and 272–292 (ILGILVGTYSSIFVASPVVLL).

This sequence belongs to the SecD/SecF family. SecF subfamily. Forms a complex with SecD. Part of the essential Sec protein translocation apparatus which comprises SecA, SecYEG and auxiliary proteins SecDF. Other proteins may also be involved.

It localises to the cell inner membrane. Its function is as follows. Part of the Sec protein translocase complex. Interacts with the SecYEG preprotein conducting channel. SecDF uses the proton motive force (PMF) to complete protein translocation after the ATP-dependent function of SecA. The chain is Protein translocase subunit SecF from Thermodesulfovibrio yellowstonii (strain ATCC 51303 / DSM 11347 / YP87).